A 333-amino-acid chain; its full sequence is DNA-directed RNA polymerase subunit alpha (333 aa).

Residues 1–251 (MEKLTKIKHR…AHFQTIGDLT (251 aa)) are alpha N-terminal domain (alpha-NTD). Positions 272–333 (DMEIRLLNLS…KLNEYGKLKN (62 aa)) are alpha C-terminal domain (alpha-CTD).

The protein belongs to the RNA polymerase alpha chain family. As to quaternary structure, homodimer. The RNAP catalytic core consists of 2 alpha, 1 beta, 1 beta' and 1 omega subunit. When a sigma factor is associated with the core the holoenzyme is formed, which can initiate transcription.

The enzyme catalyses RNA(n) + a ribonucleoside 5'-triphosphate = RNA(n+1) + diphosphate. In terms of biological role, DNA-dependent RNA polymerase catalyzes the transcription of DNA into RNA using the four ribonucleoside triphosphates as substrates. This is DNA-directed RNA polymerase subunit alpha from Mycoplasmopsis synoviae (strain 53) (Mycoplasma synoviae).